Here is a 131-residue protein sequence, read N- to C-terminus: Ribosome-binding factor A (131 aa).

Belongs to the RbfA family. Monomer. Binds 30S ribosomal subunits, but not 50S ribosomal subunits or 70S ribosomes.

The protein resides in the cytoplasm. In terms of biological role, one of several proteins that assist in the late maturation steps of the functional core of the 30S ribosomal subunit. Associates with free 30S ribosomal subunits (but not with 30S subunits that are part of 70S ribosomes or polysomes). Required for efficient processing of 16S rRNA. May interact with the 5'-terminal helix region of 16S rRNA. The protein is Ribosome-binding factor A of Thermotoga maritima (strain ATCC 43589 / DSM 3109 / JCM 10099 / NBRC 100826 / MSB8).